The chain runs to 321 residues: Peptide transport system permease protein SapB (321 aa).

8 consecutive transmembrane segments (helical) span residues 8–28 (HILW…VILL), 41–61 (IYIG…GITY), 82–102 (CFIT…ISAV), 117–137 (YVGL…VAAL), 150–170 (LLYE…FMEV), 180–200 (ILQH…MEII), 249–269 (VFTL…WPGI), and 289–309 (VIVI…FTFI). An ABC transmembrane type-1 domain is found at 75 to 303 (LPPTLELCFI…VCIILIDTFT (229 aa)).

This sequence belongs to the binding-protein-dependent transport system permease family. OppBC subfamily.

The protein localises to the cell inner membrane. Involved in a peptide intake transport system that plays a role in the resistance to antimicrobial peptides. The chain is Peptide transport system permease protein SapB (sapB) from Haemophilus influenzae (strain ATCC 51907 / DSM 11121 / KW20 / Rd).